Consider the following 211-residue polypeptide: Large ribosomal subunit protein uL3 (211 aa).

Gln150 is subject to N5-methylglutamine.

Belongs to the universal ribosomal protein uL3 family. In terms of assembly, part of the 50S ribosomal subunit. Forms a cluster with proteins L14 and L19. Methylated by PrmB.

Functionally, one of the primary rRNA binding proteins, it binds directly near the 3'-end of the 23S rRNA, where it nucleates assembly of the 50S subunit. This Pseudomonas syringae pv. syringae (strain B728a) protein is Large ribosomal subunit protein uL3.